A 152-amino-acid polypeptide reads, in one-letter code: Aspartate carbamoyltransferase regulatory chain (152 aa).

Residues Cys107, Cys112, Cys136, and Cys139 each contribute to the Zn(2+) site.

It belongs to the PyrI family. Contains catalytic and regulatory chains. It depends on Zn(2+) as a cofactor.

In terms of biological role, involved in allosteric regulation of aspartate carbamoyltransferase. This chain is Aspartate carbamoyltransferase regulatory chain, found in Chromobacterium violaceum (strain ATCC 12472 / DSM 30191 / JCM 1249 / CCUG 213 / NBRC 12614 / NCIMB 9131 / NCTC 9757 / MK).